The following is a 631-amino-acid chain: Probable sulfate transporter 3.3 (631 aa).

Over 1-69 (MEVHKVVAPP…EYSFSLLKSD (69 aa)) the chain is Cytoplasmic. A helical transmembrane segment spans residues 70 to 90 (VVSGLTIASLAIPQGISYAKL). The Extracellular segment spans residues 91-92 (AN). Residues 93 to 113 (LPPIVGLYSSFVPPLVYAVLG) form a helical membrane-spanning segment. Residues 114–117 (SSRD) lie on the Cytoplasmic side of the membrane. A helical transmembrane segment spans residues 118-138 (LAVGPVSIASLILGSMLRQQV). Over 139 to 144 (SPVDDP) the chain is Extracellular. The chain crosses the membrane as a helical span at residues 145 to 165 (VLFLQLAFSSTFFAGLFQASL). At 166–171 (GILRLG) the chain is on the cytoplasmic side. The helical transmembrane segment at 172 to 192 (FIIDFLSKATLIGFMGGAAII) threads the bilayer. Residues 193 to 223 (VSLQQLKGLLGITHFTKHMSVVPVLSSVFQH) lie on the Extracellular side of the membrane. Residues 224–244 (TNEWSWQTIVMGVCFLLFLLS) form a helical membrane-spanning segment. Residues 245-256 (TRHLSMKKPKLF) lie on the Cytoplasmic side of the membrane. Residues 257–277 (WVSAGAPLLSVIVSTLLVFVF) traverse the membrane as a helical segment. The Extracellular portion of the chain corresponds to 278 to 309 (RAERHGISVIGKLPEGLNPPSWNMLQFHGSHL). A helical transmembrane segment spans residues 310 to 330 (ALVAKTGLVTGIVSLTEGIAV). Residues 331–347 (GRTFAALKNYHVDGNKE) lie on the Cytoplasmic side of the membrane. A helical membrane pass occupies residues 348–368 (MIAIGLMNVVGSATSCYVTTG). Residues 369–384 (AFSRSAVNNNAGAKTA) lie on the Extracellular side of the membrane. A helical membrane pass occupies residues 385-405 (VSNIVMSVTVMVTLLFLMPLF). Over 406-410 (EYTPN) the chain is Cytoplasmic. The chain crosses the membrane as a helical span at residues 411-431 (VVLGAIIVTAVIGLIDLPAAC). At 432-441 (HIWKIDKFDF) the chain is on the extracellular side. A helical membrane pass occupies residues 442–462 (LVMLCAFFGVIFLSVQNGLAI). Over 463-631 (AVGLSLFKIL…SLKGPSLSNV (169 aa)) the chain is Cytoplasmic. One can recognise an STAS domain in the interval 497 to 621 (HYKEAQRIPG…LTVAEAVASL (125 aa)).

Belongs to the SLC26A/SulP transporter (TC 2.A.53) family. In terms of tissue distribution, expressed only in leaves.

It is found in the membrane. Its function is as follows. H(+)/sulfate cotransporter that may play a role in the regulation of sulfate assimilation. This chain is Probable sulfate transporter 3.3 (SULTR3;3), found in Arabidopsis thaliana (Mouse-ear cress).